Consider the following 325-residue polypeptide: Bifunctional nuclease 1 (325 aa).

One can recognise a BFN domain in the interval 117 to 252; the sequence is CVHNNPQGGH…YLAYSDGMRV (136 aa). Positions 284–318 constitute a UVR domain; that stretch reads TKEFNILSKMMQAVDEERYDEAAEWRDKLGQFRAK.

It belongs to the bifunctional nuclease family.

It localises to the nucleus. Functionally, bifunctional nuclease with both RNase and DNase activities. Involved in basal defense response. Participates in abscisic acid-derived callose deposition following infection by a necrotrophic pathogen. This chain is Bifunctional nuclease 1 (BBD1), found in Arabidopsis thaliana (Mouse-ear cress).